The chain runs to 387 residues: BarH-like 2 homeobox protein (387 aa).

3 disordered regions span residues 1–145 (MTME…FLIK), 157–240 (CAPY…TAFS), and 367–387 (PGGQ…PHPR). Positions 7-24 (SGSSFGIDTILSSASSGS) are enriched in polar residues. The segment covering 100-113 (APTQSLQPLPQQQQ) has biased composition (low complexity). The segment covering 114 to 126 (PLPPQQPPPPPPQ) has biased composition (pro residues). Residues 127–141 (QLGSAASAPRTSTSS) show a composition bias toward low complexity. Over residues 160-178 (YSTSVSSPHHTPKQESNAV) the composition is skewed to polar residues. The span at 180–220 (ESFRPKLEQEDSKTKLDKREDSQSDIKCHGTKEEGDREITS) shows a compositional bias: basic and acidic residues. The homeobox DNA-binding region spans 232–291 (PRKARTAFSDHQLNQLERSFERQKYLSVQDRMDLAAALNLTDTQVKTWYQNRRTKWKRQT).

Belongs to the BAR homeobox family.

The protein localises to the nucleus. In terms of biological role, potential regulator of neural basic helix-loop-helix genes. This chain is BarH-like 2 homeobox protein (BARHL2), found in Homo sapiens (Human).